Consider the following 204-residue polypeptide: uncharacterized protein (204 aa).

The N-terminal stretch at 1–17 is a signal peptide; the sequence is MKRLVTGLLALSLFLAA. The segment at 17 to 102 is disordered; the sequence is ACGQDSDQQK…NQSSNNQKSS (86 aa). Cysteine 18 carries the N-palmitoyl cysteine lipid modification. Cysteine 18 carries S-diacylglycerol cysteine lipidation. Positions 23–70 are enriched in basic and acidic residues; it reads DQQKDSNKEKDDKAKTEQQDKKTNDSSKDKKDNKDDSKDVNKDNKDNS. Over residues 71-102 the composition is skewed to low complexity; sequence ANDNQQQSNSNATNNDQNQTNNNQSSNNQKSS.

It is found in the cell membrane. This is an uncharacterized protein from Staphylococcus aureus (strain Mu50 / ATCC 700699).